Consider the following 147-residue polypeptide: uncharacterized protein (147 aa).

4Fe-4S ferredoxin-type domains are found at residues 80-109 (WYPK…AENG) and 110-141 (KVVV…FPDE). Positions 89, 92, 95, 99, 119, 123, 126, and 130 each coordinate [4Fe-4S] cluster.

It depends on [4Fe-4S] cluster as a cofactor.

This is an uncharacterized protein from Methanocaldococcus jannaschii (strain ATCC 43067 / DSM 2661 / JAL-1 / JCM 10045 / NBRC 100440) (Methanococcus jannaschii).